Here is a 124-residue protein sequence, read N- to C-terminus: Prefoldin subunit beta (124 aa).

It belongs to the prefoldin subunit beta family. Heterohexamer of two alpha and four beta subunits.

The protein resides in the cytoplasm. Molecular chaperone capable of stabilizing a range of proteins. Seems to fulfill an ATP-independent, HSP70-like function in archaeal de novo protein folding. This Pyrobaculum arsenaticum (strain DSM 13514 / JCM 11321 / PZ6) protein is Prefoldin subunit beta.